We begin with the raw amino-acid sequence, 462 residues long: Siroheme synthase (462 aa).

The segment at 1–201 (MQFLPLFHKL…GKPEEGERLL (201 aa)) is precorrin-2 dehydrogenase /sirohydrochlorin ferrochelatase. NAD(+) contacts are provided by residues 22–23 (EV) and 43–44 (PE). Serine 126 is modified (phosphoserine). The interval 214–462 (GEVYLVGAGP…AWFEGAQGSL (249 aa)) is uroporphyrinogen-III C-methyltransferase. Proline 223 contributes to the S-adenosyl-L-methionine binding site. Aspartate 246 serves as the catalytic Proton acceptor. Lysine 268 (proton donor) is an active-site residue. S-adenosyl-L-methionine is bound by residues 299–301 (GGD), isoleucine 304, 329–330 (TA), methionine 381, and glycine 410.

This sequence in the N-terminal section; belongs to the precorrin-2 dehydrogenase / sirohydrochlorin ferrochelatase family. It in the C-terminal section; belongs to the precorrin methyltransferase family.

It carries out the reaction uroporphyrinogen III + 2 S-adenosyl-L-methionine = precorrin-2 + 2 S-adenosyl-L-homocysteine + H(+). It catalyses the reaction precorrin-2 + NAD(+) = sirohydrochlorin + NADH + 2 H(+). The catalysed reaction is siroheme + 2 H(+) = sirohydrochlorin + Fe(2+). It functions in the pathway cofactor biosynthesis; adenosylcobalamin biosynthesis; precorrin-2 from uroporphyrinogen III: step 1/1. The protein operates within cofactor biosynthesis; adenosylcobalamin biosynthesis; sirohydrochlorin from precorrin-2: step 1/1. Its pathway is porphyrin-containing compound metabolism; siroheme biosynthesis; precorrin-2 from uroporphyrinogen III: step 1/1. It participates in porphyrin-containing compound metabolism; siroheme biosynthesis; siroheme from sirohydrochlorin: step 1/1. It functions in the pathway porphyrin-containing compound metabolism; siroheme biosynthesis; sirohydrochlorin from precorrin-2: step 1/1. Multifunctional enzyme that catalyzes the SAM-dependent methylations of uroporphyrinogen III at position C-2 and C-7 to form precorrin-2 via precorrin-1. Then it catalyzes the NAD-dependent ring dehydrogenation of precorrin-2 to yield sirohydrochlorin. Finally, it catalyzes the ferrochelation of sirohydrochlorin to yield siroheme. The sequence is that of Siroheme synthase from Ectopseudomonas mendocina (strain ymp) (Pseudomonas mendocina).